The sequence spans 63 residues: uncharacterized protein (63 aa).

This is an uncharacterized protein from Archaeoglobus fulgidus (strain ATCC 49558 / DSM 4304 / JCM 9628 / NBRC 100126 / VC-16).